Here is a 98-residue protein sequence, read N- to C-terminus: Cytochrome c-552 (98 aa).

Residues 1–18 (MKKFLLVAVVGLAGITFA) form the signal peptide. Cys28, Cys31, His32, and Met77 together coordinate heme c.

The protein belongs to the cytochrome c family. Binds 1 heme c group covalently per subunit.

Its function is as follows. Reacts with hydrogenase. This is Cytochrome c-552 from Hydrogenobacter thermophilus (strain DSM 6534 / IAM 12695 / TK-6).